Here is an 883-residue protein sequence, read N- to C-terminus: Protein SEY1 homolog (883 aa).

Topologically, residues 1 to 795 are cytoplasmic; it reads MQMDRKTQII…ETGGKMSLKN (795 aa). Residues 33 to 279 form the GB1/RHD3-type G domain; it reads GFNYNVVAIL…IPSDGFAHYC (247 aa). Residue 43–50 participates in GTP binding; the sequence is GSQSSGKS. Residues 673–693 are a coiled coil; that stretch reads LDEIMDVLKSKLDEISDNLSS. A helical membrane pass occupies residues 796–816; the sequence is VPLFFWVILLILGWNELLFFI. Over 817–819 the chain is Lumenal; it reads RFF. The helical transmembrane segment at 820–840 threads the bilayer; the sequence is FRLNIILPLFLAAAVILSTLF. Residues 841–883 lie on the Cytoplasmic side of the membrane; sequence FNGNMEVLSTINKVVFFLAKSSFGFYRQLQTMGEKVAQVPTAD.

The protein belongs to the TRAFAC class dynamin-like GTPase superfamily. GB1/RHD3 GTPase family. RHD3 subfamily.

It localises to the endoplasmic reticulum membrane. In terms of biological role, probable GTP-binding protein involved in generating and maintaining the structure of the tubular endoplasmic reticulum network. This Plasmodium knowlesi (strain H) protein is Protein SEY1 homolog.